Consider the following 368-residue polypeptide: 2-deoxy-scyllo-inosose synthase (368 aa).

NAD(+)-binding positions include Asp-42, 72–75 (EEYK), 104–108 (GLTGN), 128–129 (TT), 139–141 (SIK), 150–151 (KN), and Gln-176. Lys-141 is a catalytic residue. A Co(2+)-binding site is contributed by Glu-183. The active site involves Glu-243. Co(2+)-binding residues include His-246 and His-262.

The protein belongs to the sugar phosphate cyclases superfamily. DOI synthase family. Was isolated as a heterodimeric enzyme comprising of BtrC and a smaller polypeptide further identified as PdxT by sequence homology. Homodimer in solution. It depends on NAD(+) as a cofactor. The cofactor is Co(2+).

The enzyme catalyses D-glucose 6-phosphate = 2-deoxy-L-scyllo-inosose + phosphate. Its pathway is metabolic intermediate biosynthesis; 2-deoxystreptamine biosynthesis; 2-deoxystreptamine from D-glucose 6-phosphate: step 1/4. It functions in the pathway antibiotic biosynthesis; butirosin biosynthesis. With respect to regulation, strongly inhibited by EDTA, zinc and Cu(2+). Its function is as follows. Catalyzes the intramolecular carbocycle formation from D-glucose-6-phosphate to 2-deoxy-scyllo-inosose (DOI). In Niallia circulans (Bacillus circulans), this protein is 2-deoxy-scyllo-inosose synthase (btrC).